The following is a 194-amino-acid chain: Inosine triphosphate pyrophosphatase (194 aa).

10–15 (TSSKKK) is an ITP binding site. Glu37 serves as a coordination point for Mg(2+). Residues Lys49, 65-66 (DV), Lys82, 142-145 (FGWD), Lys166, and 171-172 (HR) contribute to the ITP site.

Belongs to the HAM1 NTPase family. In terms of assembly, homodimer. Requires Mg(2+) as cofactor. Mn(2+) is required as a cofactor.

It is found in the cytoplasm. It carries out the reaction ITP + H2O = IMP + diphosphate + H(+). It catalyses the reaction dITP + H2O = dIMP + diphosphate + H(+). The catalysed reaction is XTP + H2O = XMP + diphosphate + H(+). In terms of biological role, pyrophosphatase that hydrolyzes non-canonical purine nucleotides such as inosine triphosphate (ITP), deoxyinosine triphosphate (dITP) or xanthosine 5'-triphosphate (XTP) to their respective monophosphate derivatives. The enzyme does not distinguish between the deoxy- and ribose forms. Probably excludes non-canonical purines from RNA and DNA precursor pools, thus preventing their incorporation into RNA and DNA and avoiding chromosomal lesions. The polypeptide is Inosine triphosphate pyrophosphatase (Giardia intestinalis (strain ATCC 50803 / WB clone C6) (Giardia lamblia)).